The following is a 261-amino-acid chain: Cytochrome c oxidase subunit 3 (261 aa).

At 1–15 the chain is on the mitochondrial matrix side; sequence MTHQTHAYHMVNPSP. The chain crosses the membrane as a helical span at residues 16–34; the sequence is WPLTGALSALLMTSGLAMW. Residues 35-40 lie on the Mitochondrial intermembrane side of the membrane; sequence FHFNST. A helical transmembrane segment spans residues 41–66; it reads ILLMIGLTTNTLTMYQWWRDVIREST. Residues 67-72 are Mitochondrial matrix-facing; the sequence is FQGHHT. The helical transmembrane segment at 73-105 threads the bilayer; it reads PTVQKGLRYGMILFIISEVLFFTGFFWAFYHSS. Over 106–128 the chain is Mitochondrial intermembrane; the sequence is LAPTPELGGCWPPTGIHPLNPLE. Residues 129 to 152 traverse the membrane as a helical segment; it reads VPLLNTSVLLASGVSITWAHHSLM. Residues 153 to 155 are Mitochondrial matrix-facing; sequence EGN. The chain crosses the membrane as a helical span at residues 156 to 183; it reads RYPMLQALFITIALGVYFTLLQASEYYE. Residues 184 to 190 are Mitochondrial intermembrane-facing; that stretch reads APFTISD. Residues 191-223 form a helical membrane-spanning segment; the sequence is GVYGSTFFVATGFHGLHVIIGSTFLIVCFFRQL. Topologically, residues 224 to 232 are mitochondrial matrix; the sequence is KFHFTSNHH. The chain crosses the membrane as a helical span at residues 233-256; sequence FGFEAAAWYWHFVDVVWLFLYVSI. Residues 257-261 are Mitochondrial intermembrane-facing; that stretch reads YWWGS.

It belongs to the cytochrome c oxidase subunit 3 family. Component of the cytochrome c oxidase (complex IV, CIV), a multisubunit enzyme composed of 14 subunits. The complex is composed of a catalytic core of 3 subunits MT-CO1, MT-CO2 and MT-CO3, encoded in the mitochondrial DNA, and 11 supernumerary subunits COX4I, COX5A, COX5B, COX6A, COX6B, COX6C, COX7A, COX7B, COX7C, COX8 and NDUFA4, which are encoded in the nuclear genome. The complex exists as a monomer or a dimer and forms supercomplexes (SCs) in the inner mitochondrial membrane with NADH-ubiquinone oxidoreductase (complex I, CI) and ubiquinol-cytochrome c oxidoreductase (cytochrome b-c1 complex, complex III, CIII), resulting in different assemblies (supercomplex SCI(1)III(2)IV(1) and megacomplex MCI(2)III(2)IV(2)).

The protein localises to the mitochondrion inner membrane. The catalysed reaction is 4 Fe(II)-[cytochrome c] + O2 + 8 H(+)(in) = 4 Fe(III)-[cytochrome c] + 2 H2O + 4 H(+)(out). Component of the cytochrome c oxidase, the last enzyme in the mitochondrial electron transport chain which drives oxidative phosphorylation. The respiratory chain contains 3 multisubunit complexes succinate dehydrogenase (complex II, CII), ubiquinol-cytochrome c oxidoreductase (cytochrome b-c1 complex, complex III, CIII) and cytochrome c oxidase (complex IV, CIV), that cooperate to transfer electrons derived from NADH and succinate to molecular oxygen, creating an electrochemical gradient over the inner membrane that drives transmembrane transport and the ATP synthase. Cytochrome c oxidase is the component of the respiratory chain that catalyzes the reduction of oxygen to water. Electrons originating from reduced cytochrome c in the intermembrane space (IMS) are transferred via the dinuclear copper A center (CU(A)) of subunit 2 and heme A of subunit 1 to the active site in subunit 1, a binuclear center (BNC) formed by heme A3 and copper B (CU(B)). The BNC reduces molecular oxygen to 2 water molecules using 4 electrons from cytochrome c in the IMS and 4 protons from the mitochondrial matrix. This Raphicerus campestris (Steenbok) protein is Cytochrome c oxidase subunit 3 (MT-CO3).